The sequence spans 2291 residues: MRGHQFKSWILELREILREIKNSHHFLDSWTQFTSVGSFIHIFFHQERFLKLFDPRIWSILLSRNSQGSTSNRYFTIKGVILFVVAVLIYRINNRNMVERKNLYLIGLLPIPMNSIGPRNDTLEESVGSSNINRLIVSLLYLPKGKKISESCFLNPKESTWVLPITKKCSMPESNWGSRWWRNWIGKKRDSSCKISNETVAGIEILFKEKDLKYLEFLFVYYMDDPIRKDHDWELFDRLSLRKSRNRINLNSGPLFEILVKHWISYLMSAFREKIPIEVEGFFKQQGAGSTIQSNDIEHVSHLFSRNKWAISLQNCAQFHMWQFRQDLFVSWGKNPPESDFLRNVSRENWIWLDNVWLVNKDRFFSKVQNVSSNIQYDSTRSSFVQVTDSSQLKGSSDQSRDHLDSISNEDSEYHTLINQREIQQRKERSILWDPSFLQMERKEIESGRFPKCLSGYSSMSRLFTEREKQMINHLFPEEIEEFLGNPTRSVRSFFSDRWSELHLGSNPTERSTRDQKLLKKQQDLSFVPSRRSENKEMVNIFKIITYLQNTVSIHPISSDPGCDMVPKDEPDMDSSNKISFLNKNPFFDLFHLFHDRNRGGYTLHYDFESEERFQEMADLFTLSITEPDLVYHKGFAFSIDSCGLDQKQFLNEARDESKKKSLLVLPPIFYEENESFSRRIRKKWVRISCGNDLEDPKPKIVVFASNNIMEAVTQYRLIRNLIQIQYSTYGYIRNVLNRFFLMNRSDRNFEYGIQRDQIGKDTLNHRTIMKYTINQYLSNLKKSQKKWFEPLILISRTERSMNRDPDAYRYKWSNGSKNFQEHLEQSVSEQKSRFQVVFDRLRINQYSIDWSEVIDKKDLSKPLRFFLSKPLRFFLSKSLLFLSKLLFFLSNSLPFFCVSFGNIPIHRSEIYIYELKGPNDQLCNQLLESIGLQIVHLKKLKPFLLDDHDTSQKSKFLINGGTISPFLFNKIPKWMIDSFHTRNNRRKSFDNPDSNFSMIFHDQDNWLNPVKPFHRSSLISSFYKANRLRFLNNPHHFCFYWNTRFPFSVEKARINNSYFTYGQFLNILFIRNKIFSLCVGKKKHAFWGRDTISPIESQVSNIFIPNDFPQSGDETYNLYKSFHFPSRSDPFVRRAIYSIADISGTPLTEGQIVNFERTYCQPLSDMNLSDSEGKNLHQYLNFNSNMGLIHTPCSEKDLSSEKRKKRSLCLKKCVEKGQMYRTFQRDSAFSTLSKWNLFQTYMPWFLTSTGYKYLNLIFLDTFSDLLPILSSSQKFVSIFPDIMHGSGISWRILQKKLCLPQWNLISEISEISSKCLHNLLLSEEMIHRNNESPLISTHLRSPNAREFLYSILFLLLVAGYLVRTHLLFVSRASSELQTEFEKVKSLMIPSSMIELRKLLDRYPTSEPNSFWLKNLFLVALEQLGDSLEEIRGSASGGNMLGPAYGVKSIRSKKKDWNINLIEIIDLIPNPINRITFSRNTRHLSHTSKEIYSLIRKRKNVNGDWIDDKIESWVANSDSIADEEREFLVQFSTLTTENRIDQILLSLTHSDHLSKNDSGYQMIEQPGAIYLRYLVDIHKKHLMNYEFNPSCLAERRIFLAHYQTITYSQTSCGENSFHFPSHGKPFSLRLALSPSRGILVIGSIGTGRSYLVKYLATNSYVPFITVFLNKFLDNKPKGFLLDEIDIDDSDDIDDSDNLDASDDIGRDLDTELELLTRMNGLTMDMMPEIDRFYITLQFELAKAMSPCIIWIPNIHDLDVNESNDLSLGLLVNHLSRDCERCSTRNILVIASTHIPQKVDPALIAPNKLNTCIKIRRLLIPQQRKHFFTLSYTRGFHLEKKMFHTNGFGSITMGSNARDLVALTNEVLSISITQKKSIIDTNTIRSALHRQTWDLRSQVRSVQDHGILFYQIGRAVAQNVLLSNCPIDPISIYMKKKSCNEGDSYLYKWYFELGTSMKRLTILLYLLSCSAGSVAQDLWSLSGPDEKNGITSYGLVENDSDLVHGLLEVEGALVGSSRTEKDCSQFDNDRVTLLLRPEPRNPLDMMQKGSCSILDQRFLYEKYESEFEEGEGEGALDPQEDLFNHIVWAPRIWRPWGFLFDCIERPNELGFPYWSRSFRGKRIIYDEEDELQENDSGFLQSGTMQYQTRDRSSKEQGLFRISQFIWDPADPLFFLFKDQPPGSVFSHRELFADEEMSKGLLTSQTDPPTSIYKRWFIKNTQEKHFELLINRQRWLRTNSSLSNGSFRSNTLSESYQYLSNLFLSNGTLLDQMTKTLLRKRWLFPDEMKIGFM.

ATP is bound at residue Gly1642 to Ser1649.

It belongs to the Ycf2 family.

It localises to the plastid. The protein resides in the chloroplast stroma. Probable ATPase of unknown function. Its presence in a non-photosynthetic plant (Epifagus virginiana) and experiments in tobacco indicate that it has an essential function which is probably not related to photosynthesis. This is Protein Ycf2 A (ycf2-A) from Atropa belladonna (Belladonna).